A 396-amino-acid chain; its full sequence is NDP-glycosyltransferase YjiC (396 aa).

UDP contacts are provided by residues N18, T234, V283, H298, and N302–E306.

It belongs to the UDP-glycosyltransferase family.

It catalyses the reaction an NDP-glycose + an acceptor = a glycosylated acceptor + NDP.. In terms of biological role, glycosyltransferase that can glycosylate a wide range of substrates, including various flavonoids (flavones, flavonols, flavanones, flavanols, chalcones), isoflavonoids and stilbenes, to produce multiple glycosylated products. It can accept diverse nucleotide diphosphate-D/L-sugars as donors, including ADP-, GDP-, CDP-, TDP- or UDP-alpha-D-glucose, and catalyzes O-, N-, or S-glycosylation. In vitro, catalyzes the glycosylation of, among others, apigenin, 3-hydroxyflavone, phloretin or resveratrol, resulting in multiple glucosylated products, along with mono-, di-, tri- and tetraglucosides. Can also catalyze the glycosylation of the macrolide epothilone A with diverse NDP-D/L-sugars, forming different epothilone A glycoside derivatives. The polypeptide is NDP-glycosyltransferase YjiC (Bacillus licheniformis (strain ATCC 14580 / DSM 13 / JCM 2505 / CCUG 7422 / NBRC 12200 / NCIMB 9375 / NCTC 10341 / NRRL NRS-1264 / Gibson 46)).